The chain runs to 292 residues: Phosphoribosylaminoimidazole-succinocarboxamide synthase (292 aa).

It belongs to the SAICAR synthetase family.

It catalyses the reaction 5-amino-1-(5-phospho-D-ribosyl)imidazole-4-carboxylate + L-aspartate + ATP = (2S)-2-[5-amino-1-(5-phospho-beta-D-ribosyl)imidazole-4-carboxamido]succinate + ADP + phosphate + 2 H(+). It functions in the pathway purine metabolism; IMP biosynthesis via de novo pathway; 5-amino-1-(5-phospho-D-ribosyl)imidazole-4-carboxamide from 5-amino-1-(5-phospho-D-ribosyl)imidazole-4-carboxylate: step 1/2. The polypeptide is Phosphoribosylaminoimidazole-succinocarboxamide synthase (Elusimicrobium minutum (strain Pei191)).